The following is a 272-amino-acid chain: Undecaprenyl-diphosphatase (272 aa).

7 consecutive transmembrane segments (helical) span residues 6 to 26 (SLLI…LPVS), 45 to 65 (AKTF…VMFW), 92 to 112 (THIL…HDVI), 115 to 135 (LFYP…LLAA), 189 to 209 (YAAS…ATVL), 225 to 245 (MFAV…KTFL), and 251 to 271 (ISFV…YMVF).

The protein belongs to the UppP family.

It is found in the cell inner membrane. It carries out the reaction di-trans,octa-cis-undecaprenyl diphosphate + H2O = di-trans,octa-cis-undecaprenyl phosphate + phosphate + H(+). Its function is as follows. Catalyzes the dephosphorylation of undecaprenyl diphosphate (UPP). Confers resistance to bacitracin. The sequence is that of Undecaprenyl-diphosphatase from Pectobacterium carotovorum subsp. carotovorum (strain PC1).